The primary structure comprises 588 residues: Ufm1-specific protease (588 aa).

Active-site residues include Cys-420, Asp-544, and His-546.

Belongs to the peptidase C78 family. Interacts with odr-4.

It localises to the endoplasmic reticulum membrane. Its subcellular location is the cytoplasm. The protein resides in the perinuclear region. In terms of biological role, thiol protease which recognizes and hydrolyzes the peptide bond at the C-terminal Gly of ufm-1, a ubiquitin-like modifier protein bound to a number of target proteins. Required, with oct-4, for the localization of a subset of 7 transmembrane domain odorant receptors, including odr-10, to the cilia of olfactory neurons AWA and AWC. Operates in aggregation behavior, and responses to oxygen levels. This is Ufm1-specific protease from Caenorhabditis briggsae.